We begin with the raw amino-acid sequence, 434 residues long: GTPase Obg (434 aa).

The Obg domain occupies 4–162; sequence ADFIDRIVIY…RKLVLELKLL (159 aa). The OBG-type G domain maps to 163 to 333; sequence ADVGLVGYPN…IVYKLAEIVK (171 aa). Residues 169–176, 194–198, 215–218, 285–288, and 314–316 each bind GTP; these read GYPNVGKS, FTTTI, DIPG, NKID, and SII. Residues S176 and T196 each contribute to the Mg(2+) site. In terms of domain architecture, OCT spans 355–434; it reads LWKELPERFN…VAQRAFEYKE (80 aa).

This sequence belongs to the TRAFAC class OBG-HflX-like GTPase superfamily. OBG GTPase family. Monomer. It depends on Mg(2+) as a cofactor.

The protein localises to the cytoplasm. Its function is as follows. An essential GTPase which binds GTP, GDP and possibly (p)ppGpp with moderate affinity, with high nucleotide exchange rates and a fairly low GTP hydrolysis rate. Plays a role in control of the cell cycle, stress response, ribosome biogenesis and in those bacteria that undergo differentiation, in morphogenesis control. The polypeptide is GTPase Obg (Thermosipho africanus (strain TCF52B)).